Here is a 399-residue protein sequence, read N- to C-terminus: MAKEKFQRTKPHVNIGTIGHVDHGKTTLTAAITGVLAQKGLSEMKDYDNIDNAPEEKERGITINTSHVEYETENRHYAHVDCPGHADYVKNMITGAAQMDGAILVVAATDGPMPQTREHILLSRQVGVPAIVVFLNKMDMVDDEELLELVEMEVRELLSEYEFDGDNAPVVAGSALKALEEVKAGQLGEWSEKILELMAAVDEYIPTPERDTEKDFLMPIEDVFSISGRGTVVTGRIERGTLHLNDDVDIVGFKPTVTTKVTGIEMFRKEMDEAQAGDNVGVLLRGIKKDEVERGQVLAKPGSITPHTKFEAEVYALTKEEGGRHKPFFNGYRPQFYIRTTDVTGSVILPEGVEMVMPGDNVKLTVELIAPIALEEGTRFAIREGGRTVGAGVVTKIIE.

The 200-residue stretch at 10 to 209 folds into the tr-type G domain; sequence KPHVNIGTIG…AVDEYIPTPE (200 aa). The interval 19–26 is G1; the sequence is GHVDHGKT. 19–26 contributes to the GTP binding site; it reads GHVDHGKT. Thr-26 provides a ligand contact to Mg(2+). The G2 stretch occupies residues 60–64; that stretch reads GITIN. Residues 81–84 form a G3 region; the sequence is DCPG. GTP is bound by residues 81-85 and 136-139; these read DCPGH and NKMD. The tract at residues 136–139 is G4; it reads NKMD. The tract at residues 174 to 176 is G5; the sequence is SAL.

Belongs to the TRAFAC class translation factor GTPase superfamily. Classic translation factor GTPase family. EF-Tu/EF-1A subfamily. As to quaternary structure, monomer.

The protein resides in the cytoplasm. It carries out the reaction GTP + H2O = GDP + phosphate + H(+). Functionally, GTP hydrolase that promotes the GTP-dependent binding of aminoacyl-tRNA to the A-site of ribosomes during protein biosynthesis. The sequence is that of Elongation factor Tu from Nautilia profundicola (strain ATCC BAA-1463 / DSM 18972 / AmH).